The following is a 1255-amino-acid chain: Structural polyprotein (1255 aa).

Residues 1-33 (MFPFQPMYPMQPMPYRNPFAAPRRPWFPRTDPF) form a necessary for nucleocapsid assembly and virus assembly region. The segment at 33 to 68 (FLAMQVQELTRSMANLTFKQRREAPPEGPPAKKPKR) is host transcription inhibition. A Supraphysiological nuclear export signal motif is present at residues 41-48 (LTRSMANL). Positions 44-119 (SMANLTFKQR…KKPGKRQRMV (76 aa)) are disordered. N-linked (GlcNAc...) asparagine; by host glycosylation is present at Asn-47. Positions 64–68 (KKPKR) match the Nuclear localization signal motif. Positions 80-92 (GKKKKNQGKKKAK) are enriched in basic residues. Positions 91–127 (AKTGPPNPKAQNGNKKKTNKKPGKRQRMVMKLESDKT) are binding to the viral RNA. Thr-93 and Thr-108 each carry phosphothreonine. A compositionally biased stretch (basic residues) spans 104 to 118 (NKKKTNKKPGKRQRM). Residues 112-126 (PGKRQRMVMKLESDK) are ribosome-binding. Ser-124 is modified (phosphoserine). The Peptidase S3 domain occupies 126-275 (KTFPIMLEGK…KYTPENCEQW (150 aa)). Residue Thr-127 is modified to Phosphothreonine. The Charge relay system role is filled by His-152. The segment at 168 to 173 (KKASKY) is interaction with spike glycoprotein E2. Residues Asp-174 and Ser-226 each act as charge relay system in the active site. Residues 260-264 (EKGVT) are interaction with spike glycoprotein E2. The tract at residues 276–287 (SLVTTMCLLANV) is functions as an uncleaved signal peptide for the precursor of protein E3/E2. Residues 276–701 (SLVTTMCLLA…HYYHRYPMST (426 aa)) lie on the Extracellular side of the membrane. Disulfide bonds link Cys-282/Cys-291, Cys-353/Cys-457, Cys-356/Cys-361, Cys-424/Cys-438, Cys-485/Cys-600, Cys-534/Cys-560, and Cys-536/Cys-554. Asn-286 carries N-linked (GlcNAc...) asparagine; by host glycosylation. Asn-652 carries an N-linked (GlcNAc...) asparagine; by host glycan. Residues 702-722 (ILGLSICAAIVTVSIAASTWL) form a helical membrane-spanning segment. Residues 723 to 757 (LCKSRVSCLTPYRLTPNARMPLCLAVLCCARTARA) lie on the Cytoplasmic side of the membrane. Positions 725–729 (KSRVS) are interaction with the capsid protein. Residues Cys-730, Cys-750, and Cys-751 are each lipidated (S-palmitoyl cysteine; by host). Positions 730–750 (CLTPYRLTPNARMPLCLAVLC) are transient transmembrane before p62-6K protein processing. Cys-730 and Cys-751 are oxidised to a cystine. At 758–772 (ETTWESLDHLWNNNQ) the chain is on the extracellular side. The chain crosses the membrane as a helical span at residues 773-793 (QMFWIQLLIPLAALIVVTRLL). Arg-794 is a topological domain (cytoplasmic). A helical membrane pass occupies residues 795-815 (CVCCVVPFLVVAGAAGAGAYE). Over 816–1225 (HATTMPSQAG…SKTAWTWLTS (410 aa)) the chain is Extracellular. 4 disulfides stabilise this stretch: Cys-862–Cys-927, Cys-875–Cys-907, Cys-876–Cys-909, and Cys-881–Cys-891. An E1 fusion peptide loop region spans residues 897 to 914 (VYPFMWGGAYCFCDTENT). 2 N-linked (GlcNAc...) asparagine; by host glycosylation sites follow: Asn-947 and Asn-1083. Disulfide bonds link Cys-1072–Cys-1084, Cys-1114–Cys-1189, Cys-1119–Cys-1193, and Cys-1141–Cys-1183. Residues 1226 to 1246 (LLGGSAVIIIIGLVLATIVAM) traverse the membrane as a helical segment. Residues 1247–1255 (YVLTNQKHN) are Cytoplasmic-facing.

As to quaternary structure, homodimer. Homomultimer. Interacts with host karyopherin KPNA4; this interaction allows the nuclear import of the viral capsid protein. Interacts with spike glycoprotein E2. Interacts with host IRAK1; the interaction leads to inhibition of IRAK1-dependent signaling. Part of a tetrameric complex composed of host CRM1, host importin alpha/beta dimer and the viral capsid; this complex blocks the receptor-mediated transport through the nuclear pore. Interacts with host phosphatase PPP1CA; this interaction dephosphorylates the capsid protein, which increases its ability to bind to the viral genome. In terms of assembly, the precursor of protein E3/E2 and E1 form a heterodimer shortly after synthesis. Interacts with spike glycoprotein E2. The precursor of protein E3/E2 and E1 form a heterodimer shortly after synthesis. Processing of the precursor of protein E3/E2 into E2 and E3 results in a heterodimer of the spike glycoproteins E2 and E1. Spike at virion surface are constituted of three E2-E1 heterodimers. After target cell attachment and endocytosis, E1 change conformation to form homotrimers. Interacts with 6K protein. Interacts with host LDLRAD3; this interaction mediates viral entry to the host cell. As to quaternary structure, interacts with spike glycoprotein E1. Processing of the precursor of protein E3/E2 into E2 and E3 results in a heterodimer of the spike glycoproteins E2 and E1. Spike at virion surface are constituted of a trimer of E2-E1 heterodimers. Interacts with 6K protein. Interacts with host LDLRAD3; this interaction mediates viral entry to the host cell. In terms of assembly, oligomer. Interacts with spike glycoprotein E1. Interacts with spike glycoprotein E2. Post-translationally, structural polyprotein: Specific enzymatic cleavages in vivo yield mature proteins. Capsid protein is auto-cleaved during polyprotein translation, unmasking a signal peptide at the N-terminus of the precursor of E3/E2. The remaining polyprotein is then targeted to the host endoplasmic reticulum, where host signal peptidase cleaves it into pE2, 6K and E1 proteins. pE2 is further processed to mature E3 and E2 by host furin in trans-Golgi vesicle. Phosphorylated on serine and threonine residues. In terms of processing, palmitoylated via thioester bonds. These palmitoylations may induce disruption of the C-terminus transmembrane. This would result in the reorientation of E2 C-terminus from lumenal to cytoplasmic side. Post-translationally, N-glycosylated. Palmitoylated via thioester bonds.

The protein localises to the virion. It is found in the host cytoplasm. The protein resides in the host cell membrane. It localises to the host nucleus. Its subcellular location is the virion membrane. The protein localises to the host Golgi apparatus. It is found in the host trans-Golgi network. The protein resides in the host endoplasmic reticulum. It carries out the reaction Autocatalytic release of the core protein from the N-terminus of the togavirus structural polyprotein by hydrolysis of a -Trp-|-Ser- bond.. Its function is as follows. Forms an icosahedral capsid with a T=4 symmetry composed of 240 copies of the capsid protein surrounded by a lipid membrane through which penetrate 80 spikes composed of trimers of E1-E2 heterodimers. The capsid protein binds to the viral RNA genome at a site adjacent to a ribosome binding site for viral genome translation following genome release. Possesses a protease activity that results in its autocatalytic cleavage from the nascent structural protein. Following its self-cleavage, the capsid protein transiently associates with ribosomes, and within several minutes the protein binds to viral RNA and rapidly assembles into icosahedric core particles. The resulting nucleocapsid eventually associates with the cytoplasmic domain of the spike glycoprotein E2 at the cell membrane, leading to budding and formation of mature virions. In case of infection, new virions attach to target cells and after clathrin-mediated endocytosis their membrane fuses with the host endosomal membrane. This leads to the release of the nucleocapsid into the cytoplasm, followed by an uncoating event necessary for the genomic RNA to become accessible. The uncoating might be triggered by the interaction of capsid proteins with ribosomes. Binding of ribosomes would release the genomic RNA since the same region is genomic RNA-binding and ribosome-binding. Specifically inhibits interleukin-1 receptor-associated kinase 1/IRAK1-dependent signaling during viral entry, representing a means by which the alphaviruses may evade innate immune detection and activation prior to viral gene expression. Inhibits host transcription. Forms a tetrameric complex with XPO1/CRM1 and the nuclear import receptor importin. This complex blocks the central channel of host nuclear pores thereby inhibiting the receptor-mediated nuclear transport and thus the host mRNA and rRNA transcription. The inhibition of transcription is linked to a cytopathic effect on the host cell. Provides the signal sequence for the translocation of the precursor of protein E3/E2 to the host endoplasmic reticulum. Furin-cleaved E3 remains associated with spike glycoprotein E1 and mediates pH protection of the latter during the transport via the secretory pathway. After virion release from the host cell, the assembly protein E3 is gradually released in the extracellular space. In terms of biological role, plays a role in viral attachment to target host cell, by binding to the cell receptor LDLRAD3. Synthesized as a p62 precursor which is processed by furin at the cell membrane just before virion budding, giving rise to E2-E1 heterodimer. The p62-E1 heterodimer is stable, whereas E2-E1 is unstable and dissociate at low pH. p62 is processed at the last step, presumably to avoid E1 fusion activation before its final export to cell surface. E2 C-terminus contains a transitory transmembrane that would be disrupted by palmitoylation, resulting in reorientation of the C-terminal tail from lumenal to cytoplasmic side. This step is critical since E2 C-terminus is involved in budding by interacting with capsid proteins. This release of E2 C-terminus in cytoplasm occurs lately in protein export, and precludes premature assembly of particles at the endoplasmic reticulum membrane. Functionally, acts as a viroporin that participates in virus glycoprotein processing and transport to the plasma membrane, cell permeabilization and budding of viral particles. Disrupts the calcium homeostasis of the cell, probably at the endoplasmic reticulum level. This leads to cytoplasmic calcium elevation. Because of its lipophilic properties, the 6K protein is postulated to influence the selection of lipids that interact with the transmembrane domains of the glycoproteins, which, in turn, affects the deformability of the bilayer required for the extreme curvature that occurs as budding proceeds. Present in low amount in virions, about 3% compared to viral glycoproteins. Its function is as follows. Class II viral fusion protein. Fusion activity is inactive as long as E1 is bound to E2 in mature virion. After virus attachment to cell receptor LDLRAD3 and endocytosis, acidification of the endosome induce dissociation of E1/E2 heterodimer and concomitant trimerization of the E1 subunits. This E1 trimer is fusion active, and promotes release of viral nucleocapsid in cytoplasm after endosome and viral membrane fusion. Efficient fusion requires the presence of cholesterol and sphingolipid in the target membrane. The chain is Structural polyprotein from Venezuelan equine encephalitis virus (strain 3880) (VEEV).